The primary structure comprises 458 residues: Exodeoxyribonuclease 7 large subunit (458 aa).

This sequence belongs to the XseA family. Heterooligomer composed of large and small subunits.

It is found in the cytoplasm. The catalysed reaction is Exonucleolytic cleavage in either 5'- to 3'- or 3'- to 5'-direction to yield nucleoside 5'-phosphates.. Functionally, bidirectionally degrades single-stranded DNA into large acid-insoluble oligonucleotides, which are then degraded further into small acid-soluble oligonucleotides. This chain is Exodeoxyribonuclease 7 large subunit, found in Stutzerimonas stutzeri (strain A1501) (Pseudomonas stutzeri).